A 137-amino-acid chain; its full sequence is Structural protein A137R (137 aa).

It belongs to the asfivirus A137R family. As to quaternary structure, interacts with host TBK1.

The protein localises to the virion. It is found in the host cytoplasm. Plays a role in the inhibition of the host innate immune response. Mechanistically, promotes the autophagy-mediated lysosomal degradation of host TBK1 and affects IRF3 nuclear translocation to block type I IFN production. This Ornithodoros (relapsing fever ticks) protein is Structural protein A137R.